Reading from the N-terminus, the 387-residue chain is Patatin-11 (387 aa).

Positions 1–23 (MATTKSVLVLIFMILATTSSTFA) are cleaved as a signal peptide. Residues 32-230 (LSTDGGGIKG…TVGDPALLSL (199 aa)) form the PNPLA domain. Positions 36 to 41 (GGGIKG) match the GXGXXG motif. Residues 75-79 (GTSTG) carry the GXSXG motif. Serine 77 functions as the Nucleophile in the catalytic mechanism. Residue asparagine 115 is glycosylated (N-linked (GlcNAc...) asparagine). Aspartate 216 (proton acceptor) is an active-site residue. The short motif at 216 to 218 (DGG) is the DGA/G element. Positions 322–385 (ENALNGTTTE…DRKKLRANKA (64 aa)) form a coiled coil. An N-linked (GlcNAc...) asparagine glycan is attached at asparagine 326.

This sequence belongs to the patatin family. As to expression, tuber.

The protein localises to the vacuole. In terms of biological role, probable lipolytic acyl hydrolase (LAH), an activity which is thought to be involved in the response of tubers to pathogens. This is Patatin-11 from Solanum tuberosum (Potato).